The primary structure comprises 191 residues: Corticoliberin (191 aa).

The first 24 residues, 1–24, serve as a signal peptide directing secretion; the sequence is MRLPLLVSAGVLLVALLPCPPCRA. The propeptide occupies 25–148; it reads LLSRGPVLGA…RQEAPERERR (124 aa). Residues 115-153 are disordered; that stretch reads PLPRRPLDSPSGPAERGAENALSSRQEAPERERRSEEPP. Over residues 141–151 the composition is skewed to basic and acidic residues; that stretch reads EAPERERRSEE. I189 is modified (isoleucine amide).

This sequence belongs to the sauvagine/corticotropin-releasing factor/urotensin I family. In terms of assembly, interacts (via C-terminus) with CRFR1 (via N-terminal extracellular domain). In terms of tissue distribution, produced by the hypothalamus.

It localises to the secreted. Functionally, hormone regulating the release of corticotropin from pituitary gland. Induces NLRP6 in intestinal epithelial cells, hence may influence gut microbiota profile. This Sus scrofa (Pig) protein is Corticoliberin (CRH).